The primary structure comprises 117 residues: Ribosome-binding factor A (117 aa).

This sequence belongs to the RbfA family. In terms of assembly, monomer. Binds 30S ribosomal subunits, but not 50S ribosomal subunits or 70S ribosomes.

Its subcellular location is the cytoplasm. Its function is as follows. One of several proteins that assist in the late maturation steps of the functional core of the 30S ribosomal subunit. Associates with free 30S ribosomal subunits (but not with 30S subunits that are part of 70S ribosomes or polysomes). Required for efficient processing of 16S rRNA. May interact with the 5'-terminal helix region of 16S rRNA. The protein is Ribosome-binding factor A of Anaplasma marginale (strain St. Maries).